A 474-amino-acid chain; its full sequence is 3-isopropylmalate dehydratase large subunit (474 aa).

Residues Cys355, Cys415, and Cys418 each contribute to the [4Fe-4S] cluster site.

This sequence belongs to the aconitase/IPM isomerase family. LeuC type 1 subfamily. As to quaternary structure, heterodimer of LeuC and LeuD. Requires [4Fe-4S] cluster as cofactor.

The enzyme catalyses (2R,3S)-3-isopropylmalate = (2S)-2-isopropylmalate. It functions in the pathway amino-acid biosynthesis; L-leucine biosynthesis; L-leucine from 3-methyl-2-oxobutanoate: step 2/4. In terms of biological role, catalyzes the isomerization between 2-isopropylmalate and 3-isopropylmalate, via the formation of 2-isopropylmaleate. This is 3-isopropylmalate dehydratase large subunit from Shewanella oneidensis (strain ATCC 700550 / JCM 31522 / CIP 106686 / LMG 19005 / NCIMB 14063 / MR-1).